A 273-amino-acid polypeptide reads, in one-letter code: Dermonecrotic toxin LhSicTox-alphaIA2bi (273 aa).

2 residues coordinate Mg(2+): E25 and D27. The active-site Nucleophile is H41. Cystine bridges form between C45–C51 and C47–C190. D85 contacts Mg(2+).

It belongs to the arthropod phospholipase D family. Class II subfamily. Mg(2+) is required as a cofactor. Expressed by the venom gland.

It is found in the secreted. It carries out the reaction an N-(acyl)-sphingosylphosphocholine = an N-(acyl)-sphingosyl-1,3-cyclic phosphate + choline. It catalyses the reaction an N-(acyl)-sphingosylphosphoethanolamine = an N-(acyl)-sphingosyl-1,3-cyclic phosphate + ethanolamine. The enzyme catalyses a 1-acyl-sn-glycero-3-phosphocholine = a 1-acyl-sn-glycero-2,3-cyclic phosphate + choline. The catalysed reaction is a 1-acyl-sn-glycero-3-phosphoethanolamine = a 1-acyl-sn-glycero-2,3-cyclic phosphate + ethanolamine. Its function is as follows. Dermonecrotic toxins cleave the phosphodiester linkage between the phosphate and headgroup of certain phospholipids (sphingolipid and lysolipid substrates), forming an alcohol (often choline) and a cyclic phosphate. This toxin acts on sphingomyelin (SM). It may also act on ceramide phosphoethanolamine (CPE), lysophosphatidylcholine (LPC) and lysophosphatidylethanolamine (LPE), but not on lysophosphatidylserine (LPS), and lysophosphatidylglycerol (LPG). It acts by transphosphatidylation, releasing exclusively cyclic phosphate products as second products. Induces dermonecrosis, hemolysis, increased vascular permeability, edema, inflammatory response, and platelet aggregation. The chain is Dermonecrotic toxin LhSicTox-alphaIA2bi from Loxosceles hirsuta (Recluse spider).